We begin with the raw amino-acid sequence, 264 residues long: Thymidylate synthase (264 aa).

Residue Arg21 coordinates dUMP. A (6R)-5,10-methylene-5,6,7,8-tetrahydrofolate-binding site is contributed by His51. 126 to 127 (RR) contributes to the dUMP binding site. Cys146 (nucleophile) is an active-site residue. DUMP is bound by residues 166-169 (RSAD), Asn177, and 207-209 (HLY). Residue Asp169 coordinates (6R)-5,10-methylene-5,6,7,8-tetrahydrofolate. A (6R)-5,10-methylene-5,6,7,8-tetrahydrofolate-binding site is contributed by Ala263.

This sequence belongs to the thymidylate synthase family. Bacterial-type ThyA subfamily. Homodimer.

The protein resides in the cytoplasm. It catalyses the reaction dUMP + (6R)-5,10-methylene-5,6,7,8-tetrahydrofolate = 7,8-dihydrofolate + dTMP. It participates in pyrimidine metabolism; dTTP biosynthesis. Functionally, catalyzes the reductive methylation of 2'-deoxyuridine-5'-monophosphate (dUMP) to 2'-deoxythymidine-5'-monophosphate (dTMP) while utilizing 5,10-methylenetetrahydrofolate (mTHF) as the methyl donor and reductant in the reaction, yielding dihydrofolate (DHF) as a by-product. This enzymatic reaction provides an intracellular de novo source of dTMP, an essential precursor for DNA biosynthesis. This Bartonella henselae (strain ATCC 49882 / DSM 28221 / CCUG 30454 / Houston 1) (Rochalimaea henselae) protein is Thymidylate synthase.